Consider the following 198-residue polypeptide: Protein hunchback (198 aa).

Disordered regions lie at residues 16 to 111 (SHHH…LPGL) and 152 to 198 (NDKL…KYMA). The segment covering 17–31 (HHHHHHHAHHSHHQH) has biased composition (basic residues). Composition is skewed to low complexity over residues 35 to 46 (SNSNSNASSPHQ) and 56 to 83 (SNTN…QQQQ). The segment covering 95–105 (PSPSNNDQNSP) has biased composition (polar residues). Over residues 179–198 (EPEKEHDLMSNSSEDMKYMA) the composition is skewed to basic and acidic residues.

It belongs to the hunchback C2H2-type zinc-finger protein family.

The protein localises to the nucleus. In terms of biological role, gap class segmentation protein that controls development of head structures. This is Protein hunchback (hb) from Drosophila lineosetae (Fruit fly).